Here is a 446-residue protein sequence, read N- to C-terminus: RUN domain-containing protein 3A (446 aa).

Residues 1 to 298 (MEASFVQTTM…LQLQLEEAAA (298 aa)) form an interaction with RAP2A region. The RUN domain occupies 52–189 (DDSSEEFVNF…IDFSFCLKGE (138 aa)). A Phosphothreonine modification is found at threonine 215. Residues 216–239 (DEEERHSAESSTSEDNSPEHPYLP) are disordered. Serine 232 bears the Phosphoserine mark. Positions 267-322 (YLEELVRLRESQLKDLEAENRRLQLQLEEAAAQNQREKRELEGVILELQEQLTGLI) form a coiled coil. The segment covering 372-384 (PLSAEASLSSDSQ) has biased composition (polar residues). Residues 372–404 (PLSAEASLSSDSQRLGEGTRDEEPWGPIGKDPT) are disordered. Phosphoserine is present on residues serine 416 and serine 419.

The protein belongs to the RUNDC3 family. As to quaternary structure, interacts with the GTP-bound form of RAP2A.

May act as an effector of RAP2A in neuronal cells. This chain is RUN domain-containing protein 3A (RUNDC3A), found in Homo sapiens (Human).